A 250-amino-acid chain; its full sequence is Histone H1.3 (250 aa).

Disordered regions lie at residues 17–53 and 104–250; these read AASG…QMVD and QTKG…ATKK. Residues 27–42 are compositionally biased toward low complexity; that stretch reads KKAAATPKSKKSTAAP. The H15 domain occupies 44–118; that stretch reads SHPPTQQMVD…GASGSFKLSR (75 aa). Positions 120 to 133 are enriched in basic and acidic residues; sequence AKKDAKPKASAVEK. Low complexity predominate over residues 138–161; that stretch reads VNASAAAATKRSSSTSTTKKAAGA. The span at 174–191 shows a compositional bias: basic and acidic residues; the sequence is KNVEKKKADKEKAKDAKK. Low complexity predominate over residues 192 to 234; that stretch reads TGTIKAKLTTAKAKSSATKPKTPKPKTTSAKPKKVVSATTPKK. Over residues 235-250 the composition is skewed to basic residues; the sequence is TAVKKPKAKTASATKK.

This sequence belongs to the histone H1/H5 family.

The protein localises to the nucleus. It is found in the chromosome. Histones H1 are necessary for the condensation of nucleosome chains into higher-order structures. The sequence is that of Histone H1.3 (His1.3) from Drosophila virilis (Fruit fly).